A 257-amino-acid chain; its full sequence is Imidazole glycerol phosphate synthase subunit HisF (257 aa).

Active-site residues include D11 and D130.

The protein belongs to the HisA/HisF family. Heterodimer of HisH and HisF.

The protein localises to the cytoplasm. It catalyses the reaction 5-[(5-phospho-1-deoxy-D-ribulos-1-ylimino)methylamino]-1-(5-phospho-beta-D-ribosyl)imidazole-4-carboxamide + L-glutamine = D-erythro-1-(imidazol-4-yl)glycerol 3-phosphate + 5-amino-1-(5-phospho-beta-D-ribosyl)imidazole-4-carboxamide + L-glutamate + H(+). The protein operates within amino-acid biosynthesis; L-histidine biosynthesis; L-histidine from 5-phospho-alpha-D-ribose 1-diphosphate: step 5/9. IGPS catalyzes the conversion of PRFAR and glutamine to IGP, AICAR and glutamate. The HisF subunit catalyzes the cyclization activity that produces IGP and AICAR from PRFAR using the ammonia provided by the HisH subunit. The chain is Imidazole glycerol phosphate synthase subunit HisF from Shewanella loihica (strain ATCC BAA-1088 / PV-4).